Reading from the N-terminus, the 130-residue chain is Protein ApaG (130 aa).

The region spanning 3 to 127 (SAVTQDIQIT…FSLDSPFVRR (125 aa)) is the ApaG domain.

This chain is Protein ApaG, found in Methylocella silvestris (strain DSM 15510 / CIP 108128 / LMG 27833 / NCIMB 13906 / BL2).